Here is a 310-residue protein sequence, read N- to C-terminus: MANVTAAMVKELREKTGTGMMDCKNALNETGGDIEAAVDWLRKKGLSKAAKKAGRVAAEGLIALDVEGTSGVLVEVNSETDFVARNEDFQFLVRNIARVAIQQGLTDVEALKGAHYPAGGVLGDAISEAVAKIGENMTLRRAALIHVPTGAIGSYMHNSVTEGLGKIGVLVGLATEGNAEAVQPLAREIALHIAAAAPLAIDASGLDPAVVEREKAVLAEKNAGKPANVLEKIVESGLKSFYKETCLLDQVSNYPEHAGKTIGQVLKDTEKAAGAPVTLVAFYRYALGEGIEKQESDFAAEVAAAASGQA.

The segment at 80 to 83 (TDFV) is involved in Mg(2+) ion dislocation from EF-Tu.

Belongs to the EF-Ts family.

The protein localises to the cytoplasm. In terms of biological role, associates with the EF-Tu.GDP complex and induces the exchange of GDP to GTP. It remains bound to the aminoacyl-tRNA.EF-Tu.GTP complex up to the GTP hydrolysis stage on the ribosome. In Beijerinckia indica subsp. indica (strain ATCC 9039 / DSM 1715 / NCIMB 8712), this protein is Elongation factor Ts.